A 210-amino-acid chain; its full sequence is uncharacterized protein (210 aa).

Positions 101-114 (QELPEPSSPQSQSS) are enriched in low complexity. A disordered region spans residues 101-166 (QELPEPSSPQ…SSGVSSDLQK (66 aa)). Polar residues predominate over residues 147-164 (RSTSPVTASTSSGVSSDL).

This is an uncharacterized protein from Alcelaphine herpesvirus 1 (strain C500) (AlHV-1).